A 107-amino-acid polypeptide reads, in one-letter code: Parvalbumin beta (107 aa).

Residue Ser1 is modified to N-acetylserine. 2 EF-hand domains span residues 37–72 (KSLD…FSPS) and 76–107 (LTDA…MIKA). Ca(2+) is bound by residues Asp50, Asp52, Ser54, Phe56, Glu58, Glu61, Asp89, Asp91, Asp93, Met95, and Glu100.

Belongs to the parvalbumin family.

In terms of biological role, in muscle, parvalbumin is thought to be involved in relaxation after contraction. It binds two calcium ions. The sequence is that of Parvalbumin beta from Esox lucius (Northern pike).